Reading from the N-terminus, the 344-residue chain is Phosphoribosylformylglycinamidine cyclo-ligase (344 aa).

This sequence belongs to the AIR synthase family.

The protein resides in the cytoplasm. The enzyme catalyses 2-formamido-N(1)-(5-O-phospho-beta-D-ribosyl)acetamidine + ATP = 5-amino-1-(5-phospho-beta-D-ribosyl)imidazole + ADP + phosphate + H(+). The protein operates within purine metabolism; IMP biosynthesis via de novo pathway; 5-amino-1-(5-phospho-D-ribosyl)imidazole from N(2)-formyl-N(1)-(5-phospho-D-ribosyl)glycinamide: step 2/2. This chain is Phosphoribosylformylglycinamidine cyclo-ligase, found in Neisseria meningitidis serogroup B (strain ATCC BAA-335 / MC58).